The sequence spans 201 residues: LexA repressor (201 aa).

The H-T-H motif DNA-binding region spans 27–47; the sequence is RMEISSAFGFASPNAAEDHLK. Residues Ser116 and Lys153 each act as for autocatalytic cleavage activity in the active site.

This sequence belongs to the peptidase S24 family. As to quaternary structure, homodimer.

It catalyses the reaction Hydrolysis of Ala-|-Gly bond in repressor LexA.. Functionally, represses a number of genes involved in the response to DNA damage (SOS response), including recA and lexA. In the presence of single-stranded DNA, RecA interacts with LexA causing an autocatalytic cleavage which disrupts the DNA-binding part of LexA, leading to derepression of the SOS regulon and eventually DNA repair. The polypeptide is LexA repressor (Dechloromonas aromatica (strain RCB)).